A 430-amino-acid polypeptide reads, in one-letter code: Elongation factor 1-alpha (430 aa).

The 213-residue stretch at 7–219 (KPHVNIVFIG…DQIPEPEKPV (213 aa)) folds into the tr-type G domain. The segment at 16 to 23 (GHVDHGKS) is G1. 16–23 (GHVDHGKS) contacts GTP. Residue Ser23 participates in Mg(2+) binding. Positions 70–74 (GITID) are G2. A G3 region spans residues 91–94 (DAPG). Residues 91–95 (DAPGH) and 146–149 (NKMD) contribute to the GTP site. The G4 stretch occupies residues 146–149 (NKMD). A G5 region spans residues 183–185 (SAW).

This sequence belongs to the TRAFAC class translation factor GTPase superfamily. Classic translation factor GTPase family. EF-Tu/EF-1A subfamily.

Its subcellular location is the cytoplasm. The enzyme catalyses GTP + H2O = GDP + phosphate + H(+). In terms of biological role, GTP hydrolase that promotes the GTP-dependent binding of aminoacyl-tRNA to the A-site of ribosomes during protein biosynthesis. The polypeptide is Elongation factor 1-alpha (Pyrococcus woesei).